The primary structure comprises 305 residues: Serine/threonine-protein phosphatase 6 catalytic subunit (305 aa).

Residue Met-1 is modified to N-acetylmethionine. Residues Asp-53, His-55, Asp-81, and Asn-113 each contribute to the Mn(2+) site. His-114 (proton donor) is an active-site residue. Positions 163 and 237 each coordinate Mn(2+).

This sequence belongs to the PPP phosphatase family. PP-6 (PP-V) subfamily. Protein phosphatase 6 (PP6) holoenzyme is proposed to be a heterotrimeric complex formed by the catalytic subunit, a SAPS domain-containing subunit (PP6R) and an ankyrin repeat-domain containing regulatory subunit (ARS). Interacts with subunits PPP6R1, PPP6R2 and PPP6R3. Interacts with subunit ANKRD28. Interacts with IGBP1. Interacts with MAP3K7. Interacts with NFKBIE. Interacts with TRIM14 and WRNIP1; these interactions positively regulate the RIG-I signaling pathway. It depends on Mn(2+) as a cofactor. As to expression, ubiquitously expressed in all tissues tested with strongest expression in lung, spleen, liver, kidney and brain. Weaker expression observed in bladder, pancreas, heart and skeletal muscle.

It localises to the mitochondrion. It is found in the cytoplasm. It carries out the reaction O-phospho-L-seryl-[protein] + H2O = L-seryl-[protein] + phosphate. It catalyses the reaction O-phospho-L-threonyl-[protein] + H2O = L-threonyl-[protein] + phosphate. Its function is as follows. Catalytic subunit of protein phosphatase 6 (PP6). PP6 is a component of a signaling pathway regulating cell cycle progression in response to IL2 receptor stimulation. N-terminal domain restricts G1 to S phase progression in cancer cells, in part through control of cyclin D13 During mitosis, regulates spindle positioning. Down-regulates MAP3K7 kinase activation of the IL1 signaling pathway by dephosphorylation of MAP3K7. Acts as a regulator of innate immunity by mediating dephosphorylation CGAS, STING1 and RIGI. Also participates in the innate immune defense against viruses by desphosphorylating RIGI, an essential step that triggers RIGI-mediated signaling activation. Also regulates innate immunity by acting as a negative regulator of the cGAS-STING pathway: mediates dephosphorylation and inactivation of CGAS and STING1. CGAS dephosphorylation at 'Ser-420' impairs its ability to bind GTP, thereby inactivating it. This is Serine/threonine-protein phosphatase 6 catalytic subunit from Mus musculus (Mouse).